The sequence spans 220 residues: MAILFAVVARGTTILAKHAWCGGNFLEVTEQILAKIPSENNKLTYPHGNYLFHYICQDRIVYLCITDDDFERSRAFNFLNEIKKRFQTTYGSRAQTALPYAMNSEFSSVLAAQLKHHSENKGLDKVMETQAQVDELKGIMVRNIDLVAQRGERLELLIDKTENLVDSSVTFKTTSRNLARAMCMKNLKLTIIIIIVSIVFIYIIVSPLCGGFTWPSCVKK.

Ala-2 is modified (N-acetylalanine). The Cytoplasmic portion of the chain corresponds to 2 to 188 (AILFAVVARG…ARAMCMKNLK (187 aa)). The Longin domain occupies 7 to 110 (VVARGTTILA…AMNSEFSSVL (104 aa)). In terms of domain architecture, v-SNARE coiled-coil homology spans 125-185 (KVMETQAQVD…RNLARAMCMK (61 aa)). Residues Ser-167 and Ser-168 each carry the phosphoserine modification. A helical; Anchor for type IV membrane protein transmembrane segment spans residues 189 to 209 (LTIIIIIVSIVFIYIIVSPLC). Over 210 to 220 (GGFTWPSCVKK) the chain is Vesicular.

Belongs to the synaptobrevin family. In terms of assembly, component of the SNARE complex composed of STX4, SNAP23 and VAMP7 that binds SYT7 during lysosomal exocytosis. Component of the SNARE complex composed of STX7, STX8, VAMP7 and VTI1B that is required for heterotypic fusion of late endosomes with lysosomes in liver cells. May interact with STX17. Interacts with PICALM. Interacts with RAB21.

The protein resides in the cytoplasmic vesicle. Its subcellular location is the secretory vesicle membrane. It localises to the golgi apparatus. The protein localises to the trans-Golgi network membrane. It is found in the late endosome membrane. The protein resides in the lysosome membrane. Its subcellular location is the endoplasmic reticulum membrane. It localises to the phagosome membrane. The protein localises to the synapse. It is found in the synaptosome. In terms of biological role, involved in the targeting and/or fusion of transport vesicles to their target membrane during transport of proteins from the early endosome to the lysosome. Required for heterotypic fusion of late endosomes with lysosomes and homotypic lysosomal fusion. Required for calcium regulated lysosomal exocytosis. Involved in the export of chylomicrons from the endoplasmic reticulum to the cis Golgi. Required for exocytosis of mediators during eosinophil and neutrophil degranulation, and target cell killing by natural killer cells. Required for focal exocytosis of late endocytic vesicles during phagosome formation. The chain is Vesicle-associated membrane protein 7 (VAMP7) from Pongo abelii (Sumatran orangutan).